Here is a 638-residue protein sequence, read N- to C-terminus: Eukaryotic translation initiation factor 2A (638 aa).

WD repeat units follow at residues 287–329 (SKEG…FDFG) and 331–370 (GPRN…KLAN). Positions 441 to 450 (KITKAKHEGI) are enriched in basic and acidic residues. Positions 441 to 593 (KITKAKHEGI…SDKERKIRSV (153 aa)) are disordered. Thr-463 bears the Phosphothreonine mark. Low complexity predominate over residues 492 to 501 (AAAGGVNGNK). Residues 583–593 (ISDKERKIRSV) are compositionally biased toward basic and acidic residues.

This sequence belongs to the WD repeat EIF2A family.

Its function is as follows. Functions in the early steps of protein synthesis of a small number of specific mRNAs. Acts by directing the binding of methionyl-tRNAi to 40S ribosomal subunits. In contrast to the eIF-2 complex, it binds methionyl-tRNAi to 40S subunits in a codon-dependent manner, whereas the eIF-2 complex binds methionyl-tRNAi to 40S subunits in a GTP-dependent manner. This chain is Eukaryotic translation initiation factor 2A, found in Drosophila melanogaster (Fruit fly).